A 116-amino-acid chain; its full sequence is Large ribosomal subunit protein bL17 (116 aa).

It belongs to the bacterial ribosomal protein bL17 family. As to quaternary structure, part of the 50S ribosomal subunit. Contacts protein L32.

The polypeptide is Large ribosomal subunit protein bL17 (Prochlorococcus marinus (strain SARG / CCMP1375 / SS120)).